A 274-amino-acid chain; its full sequence is Undecaprenyl-diphosphatase (274 aa).

The next 7 helical transmembrane spans lie at 4–24 (PLFV…FLPI), 41–61 (DATS…AVCW), 83–103 (FVGL…MFHS), 108–128 (LLFN…LILW), 184–204 (AAEF…VYDL), 218–238 (VFAI…KAFI), and 246–266 (FIAF…TWQL).

It belongs to the UppP family.

It localises to the cell inner membrane. It carries out the reaction di-trans,octa-cis-undecaprenyl diphosphate + H2O = di-trans,octa-cis-undecaprenyl phosphate + phosphate + H(+). Its function is as follows. Catalyzes the dephosphorylation of undecaprenyl diphosphate (UPP). Confers resistance to bacitracin. This is Undecaprenyl-diphosphatase from Aromatoleum aromaticum (strain DSM 19018 / LMG 30748 / EbN1) (Azoarcus sp. (strain EbN1)).